We begin with the raw amino-acid sequence, 356 residues long: Peptidyl-prolyl isomerase CWC27 (356 aa).

The PPIase cyclophilin-type domain maps to 5-205 (TTAKVVLTTT…KPKRKLQVNH (201 aa)). Disordered stretches follow at residues 172 to 214 (KAGA…EEPV), 234 to 266 (NVAK…DAED), and 279 to 331 (LEKF…EDDD). Positions 181–192 (AESRENKSGSRD) are enriched in basic and acidic residues. The segment covering 193 to 202 (RPKKPKRKLQ) has biased composition (basic residues). Basic and acidic residues predominate over residues 279-294 (LEKFRNMSRTKPDTKP).

The protein belongs to the cyclophilin-type PPIase family. CWC27 subfamily. Associated with the spliceosome.

The protein localises to the cytoplasm. Its subcellular location is the nucleus. It carries out the reaction [protein]-peptidylproline (omega=180) = [protein]-peptidylproline (omega=0). PPIases accelerate the folding of proteins. It catalyzes the cis-trans isomerization of proline imidic peptide bonds in oligopeptides. Involved in pre-mRNA splicing. This Yarrowia lipolytica (strain CLIB 122 / E 150) (Yeast) protein is Peptidyl-prolyl isomerase CWC27 (CWC27).